Consider the following 264-residue polypeptide: Undecaprenyl-diphosphatase (264 aa).

The next 8 membrane-spanning stretches (helical) occupy residues 7-27, 41-61, 89-109, 114-134, 144-164, 186-206, 219-239, and 244-264; these read IVLA…SAHL, LIFD…YYQA, VLLG…FVAV, IEII…ASWF, TISW…LIPG, IQFS…LMLI, LLVL…IFVI, and MVGM…LFFL.

Belongs to the UppP family.

It localises to the cell inner membrane. The catalysed reaction is di-trans,octa-cis-undecaprenyl diphosphate + H2O = di-trans,octa-cis-undecaprenyl phosphate + phosphate + H(+). In terms of biological role, catalyzes the dephosphorylation of undecaprenyl diphosphate (UPP). Confers resistance to bacitracin. The chain is Undecaprenyl-diphosphatase from Vesicomyosocius okutanii subsp. Calyptogena okutanii (strain HA).